The primary structure comprises 454 residues: Notoamide biosynthesis cluster protein M' (454 aa).

N-linked (GlcNAc...) asparagine glycosylation is found at Asn-51 and Asn-74. Residues 205-219 (KARSKEKKPKRKKSK) show a composition bias toward basic residues. Positions 205–224 (KARSKEKKPKRKKSKAEKEH) are disordered. The next 2 helical transmembrane spans lie at 334–354 (MTTVAFVSMVYLPGTFVSGLF) and 375–395 (FWMYWAVTIPLTLLTLGVWGV).

Its subcellular location is the membrane. Functionally, part of the gene cluster that mediates the biosynthesis of notoamide, a fungal indole alkaloid that belongs to a family of natural products containing a characteristic bicyclo[2.2.2]diazaoctane core. The first step of notoamide biosynthesis involves coupling of L-proline and L-tryptophan by the bimodular NRPS notE', to produce cyclo-L-tryptophan-L-proline called brevianamide F. The reverse prenyltransferase notF' then acts as a deoxybrevianamide E synthase and converts brevianamide F to deoxybrevianamide E via reverse prenylation at C-2 of the indole ring leading to the bicyclo[2.2.2]diazaoctane core. Deoxybrevianamide E is further hydroxylated at C-6 of the indole ring, likely catalyzed by the cytochrome P450 monooxygenase notG', to yield 6-hydroxy-deoxybrevianamide E. 6-hydroxy-deoxybrevianamide E is a specific substrate of the prenyltransferase notC' for normal prenylation at C-7 to produce 6-hydroxy-7-prenyl-deoxybrevianamide, also called notoamide S. As the proposed pivotal branching point in notoamide biosynthesis, notoamide S can be diverted to notoamide E through an oxidative pyran ring closure putatively catalyzed by either notH' cytochrome P450 monooxygenase or the notD' FAD-linked oxidoreductase. This step would be followed by an indole 2,3-epoxidation-initiated pinacol-like rearrangement catalyzed by the notB' FAD-dependent monooxygenase leading to the formation of notoamide C and notoamide D. On the other hand notoamide S is converted to notoamide T by notH' (or notD'), a bifunctional oxidase that also functions as the intramolecular Diels-Alderase responsible for generation of (-)-notoamide T. To generate antipodal (+)-notoaminide T, notH (or notD) in Aspergillus strain MF297-2 is expected to catalyze a Diels-Alder reaction leading to the opposite stereochemistry. The remaining oxidoreductase notD' (or notH') likely catalyzes the oxidative pyran ring formation to yield (-)-stephacidin A. The FAD-dependent monooxygenase notI' is highly similar to notB' and is predicted to catalyze a similar conversion from (-)-stephacidin A to (+)-notoamide B via the 2,3-epoxidation of (-)-stephacidin A followed by a pinacol-type rearrangement. Finally, it remains unclear which enzyme could be responsible for the final hydroxylation steps leading to notoamide A and sclerotiamide. The function of notM' in the notoamide biosynthesis has not been determined yet. This Aspergillus versicolor protein is Notoamide biosynthesis cluster protein M'.